The following is a 139-amino-acid chain: Small integral membrane protein 34 (139 aa).

Residues 46 to 66 (GTSAAWYILTIIGIYAVIFVF) form a helical membrane-spanning segment.

It is found in the membrane. The polypeptide is Small integral membrane protein 34 (Homo sapiens (Human)).